Consider the following 211-residue polypeptide: Holliday junction branch migration complex subunit RuvA (211 aa).

The domain I stretch occupies residues M1–A64. Positions N65–V143 are domain II. The tract at residues S144–T162 is flexible linker. The segment at F163 to I211 is domain III.

This sequence belongs to the RuvA family. Homotetramer. Forms an RuvA(8)-RuvB(12)-Holliday junction (HJ) complex. HJ DNA is sandwiched between 2 RuvA tetramers; dsDNA enters through RuvA and exits via RuvB. An RuvB hexamer assembles on each DNA strand where it exits the tetramer. Each RuvB hexamer is contacted by two RuvA subunits (via domain III) on 2 adjacent RuvB subunits; this complex drives branch migration. In the full resolvosome a probable DNA-RuvA(4)-RuvB(12)-RuvC(2) complex forms which resolves the HJ.

Its subcellular location is the cytoplasm. Its function is as follows. The RuvA-RuvB-RuvC complex processes Holliday junction (HJ) DNA during genetic recombination and DNA repair, while the RuvA-RuvB complex plays an important role in the rescue of blocked DNA replication forks via replication fork reversal (RFR). RuvA specifically binds to HJ cruciform DNA, conferring on it an open structure. The RuvB hexamer acts as an ATP-dependent pump, pulling dsDNA into and through the RuvAB complex. HJ branch migration allows RuvC to scan DNA until it finds its consensus sequence, where it cleaves and resolves the cruciform DNA. In Colwellia psychrerythraea (strain 34H / ATCC BAA-681) (Vibrio psychroerythus), this protein is Holliday junction branch migration complex subunit RuvA.